Reading from the N-terminus, the 541-residue chain is Chaperonin GroEL (541 aa).

ATP-binding positions include 29 to 32 (TLGP), 86 to 90 (DGTTT), G413, 476 to 478 (NAA), and D492.

It belongs to the chaperonin (HSP60) family. Forms a cylinder of 14 subunits composed of two heptameric rings stacked back-to-back. Interacts with the co-chaperonin GroES.

Its subcellular location is the cytoplasm. It catalyses the reaction ATP + H2O + a folded polypeptide = ADP + phosphate + an unfolded polypeptide.. In terms of biological role, together with its co-chaperonin GroES, plays an essential role in assisting protein folding. The GroEL-GroES system forms a nano-cage that allows encapsulation of the non-native substrate proteins and provides a physical environment optimized to promote and accelerate protein folding. This chain is Chaperonin GroEL, found in Streptococcus equi subsp. zooepidemicus (strain MGCS10565).